Reading from the N-terminus, the 432-residue chain is Serine hydroxymethyltransferase (432 aa).

Residues L117 and 121–123 each bind (6S)-5,6,7,8-tetrahydrofolate; that span reads GHL. K226 is modified (N6-(pyridoxal phosphate)lysine). 366–368 provides a ligand contact to (6S)-5,6,7,8-tetrahydrofolate; it reads SPF.

The protein belongs to the SHMT family. In terms of assembly, homodimer. Requires pyridoxal 5'-phosphate as cofactor.

It is found in the cytoplasm. It carries out the reaction (6R)-5,10-methylene-5,6,7,8-tetrahydrofolate + glycine + H2O = (6S)-5,6,7,8-tetrahydrofolate + L-serine. It functions in the pathway one-carbon metabolism; tetrahydrofolate interconversion. The protein operates within amino-acid biosynthesis; glycine biosynthesis; glycine from L-serine: step 1/1. Functionally, catalyzes the reversible interconversion of serine and glycine with tetrahydrofolate (THF) serving as the one-carbon carrier. This reaction serves as the major source of one-carbon groups required for the biosynthesis of purines, thymidylate, methionine, and other important biomolecules. Also exhibits THF-independent aldolase activity toward beta-hydroxyamino acids, producing glycine and aldehydes, via a retro-aldol mechanism. This chain is Serine hydroxymethyltransferase, found in Salinibacter ruber (strain DSM 13855 / M31).